We begin with the raw amino-acid sequence, 347 residues long: Ornithine carbamoyltransferase (347 aa).

Residues 56-59 (STRT), Gln-83, Arg-107, and 134-137 (HPTQ) contribute to the carbamoyl phosphate site. L-ornithine contacts are provided by residues Asn-168, Asp-232, and 236-237 (SM). Residues 274 to 275 (CL) and Arg-320 each bind carbamoyl phosphate.

The protein belongs to the aspartate/ornithine carbamoyltransferase superfamily. OTCase family.

Its subcellular location is the cytoplasm. The enzyme catalyses carbamoyl phosphate + L-ornithine = L-citrulline + phosphate + H(+). Reversibly catalyzes the transfer of the carbamoyl group from carbamoyl phosphate (CP) to the N(epsilon) atom of ornithine (ORN) to produce L-citrulline. This Blochmanniella floridana protein is Ornithine carbamoyltransferase.